A 432-amino-acid chain; its full sequence is 3-phosphoshikimate 1-carboxyvinyltransferase (432 aa).

Lys-23, Ser-24, and Arg-28 together coordinate 3-phosphoshikimate. Lys-23 is a binding site for phosphoenolpyruvate. Positions 95 and 123 each coordinate phosphoenolpyruvate. 3-phosphoshikimate-binding residues include Ser-167, Gln-169, Asp-317, and Lys-344. Gln-169 serves as a coordination point for phosphoenolpyruvate. Catalysis depends on Asp-317, which acts as the Proton acceptor. Positions 348 and 390 each coordinate phosphoenolpyruvate.

This sequence belongs to the EPSP synthase family. Monomer.

Its subcellular location is the cytoplasm. The enzyme catalyses 3-phosphoshikimate + phosphoenolpyruvate = 5-O-(1-carboxyvinyl)-3-phosphoshikimate + phosphate. It functions in the pathway metabolic intermediate biosynthesis; chorismate biosynthesis; chorismate from D-erythrose 4-phosphate and phosphoenolpyruvate: step 6/7. Its function is as follows. Catalyzes the transfer of the enolpyruvyl moiety of phosphoenolpyruvate (PEP) to the 5-hydroxyl of shikimate-3-phosphate (S3P) to produce enolpyruvyl shikimate-3-phosphate and inorganic phosphate. The sequence is that of 3-phosphoshikimate 1-carboxyvinyltransferase from Staphylococcus aureus (strain bovine RF122 / ET3-1).